Here is a 541-residue protein sequence, read N- to C-terminus: Chaperonin GroEL (541 aa).

ATP-binding positions include 29–32, 86–90, G413, 476–478, and D492; these read TLGP, DGTTT, and NAA. Positions 521–541 are disordered; the sequence is KPEENAPAAPAAPNPGMGGMM. Residues 525-535 show a composition bias toward low complexity; the sequence is NAPAAPAAPNP.

It belongs to the chaperonin (HSP60) family. As to quaternary structure, forms a cylinder of 14 subunits composed of two heptameric rings stacked back-to-back. Interacts with the co-chaperonin GroES.

It is found in the cytoplasm. The enzyme catalyses ATP + H2O + a folded polypeptide = ADP + phosphate + an unfolded polypeptide.. In terms of biological role, together with its co-chaperonin GroES, plays an essential role in assisting protein folding. The GroEL-GroES system forms a nano-cage that allows encapsulation of the non-native substrate proteins and provides a physical environment optimized to promote and accelerate protein folding. In Lactiplantibacillus plantarum (strain ATCC BAA-793 / NCIMB 8826 / WCFS1) (Lactobacillus plantarum), this protein is Chaperonin GroEL.